Reading from the N-terminus, the 245-residue chain is Phycoerythrobilin:ferredoxin oxidoreductase (245 aa).

Belongs to the HY2 family.

The enzyme catalyses (3Z)-phycoerythrobilin + oxidized 2[4Fe-4S]-[ferredoxin] = 15,16-dihydrobiliverdin + reduced 2[4Fe-4S]-[ferredoxin] + 2 H(+). Catalyzes the two-electron reduction of the C2 and C3(1) diene system of 15,16-dihydrobiliverdin. The sequence is that of Phycoerythrobilin:ferredoxin oxidoreductase (pebB) from Gloeobacter violaceus (strain ATCC 29082 / PCC 7421).